Consider the following 115-residue polypeptide: NADH-ubiquinone oxidoreductase chain 3 (115 aa).

A run of 3 helical transmembrane segments spans residues 3–23 (LMLTLFINTSLASVLVLIAFW), 55–75 (FFLVAITFLLFDLEIALLLPL), and 86–106 (TMLTMALILISLLAASLAYEW).

This sequence belongs to the complex I subunit 3 family. Core subunit of respiratory chain NADH dehydrogenase (Complex I) which is composed of 45 different subunits. Interacts with TMEM186. Interacts with TMEM242.

It localises to the mitochondrion inner membrane. It catalyses the reaction a ubiquinone + NADH + 5 H(+)(in) = a ubiquinol + NAD(+) + 4 H(+)(out). Core subunit of the mitochondrial membrane respiratory chain NADH dehydrogenase (Complex I) which catalyzes electron transfer from NADH through the respiratory chain, using ubiquinone as an electron acceptor. Essential for the catalytic activity of complex I. In Ceratotherium simum (White rhinoceros), this protein is NADH-ubiquinone oxidoreductase chain 3.